The chain runs to 269 residues: GTP cyclohydrolase FolE2 (269 aa).

Belongs to the GTP cyclohydrolase IV family.

The enzyme catalyses GTP + H2O = 7,8-dihydroneopterin 3'-triphosphate + formate + H(+). It functions in the pathway cofactor biosynthesis; 7,8-dihydroneopterin triphosphate biosynthesis; 7,8-dihydroneopterin triphosphate from GTP: step 1/1. Converts GTP to 7,8-dihydroneopterin triphosphate. This is GTP cyclohydrolase FolE2 from Thiobacillus denitrificans (strain ATCC 25259 / T1).